A 266-amino-acid chain; its full sequence is Small ribosomal subunit protein eS1 (266 aa).

Positions 235-266 (GGAGGAAKASGDDTGAKVERADGYEPPIQETV) are disordered. The segment covering 244 to 257 (SGDDTGAKVERADG) has biased composition (basic and acidic residues).

It belongs to the eukaryotic ribosomal protein eS1 family. Component of the small ribosomal subunit. Mature ribosomes consist of a small (40S) and a large (60S) subunit. The 40S subunit contains about 33 different proteins and 1 molecule of RNA (18S). The 60S subunit contains about 49 different proteins and 3 molecules of RNA (28S, 5.8S and 5S).

It is found in the cytoplasm. In terms of biological role, component of the small ribosomal subunit. The ribosome is a large ribonucleoprotein complex responsible for the synthesis of proteins in the cell. This chain is Small ribosomal subunit protein eS1 (rps3a), found in Oryzias latipes (Japanese rice fish).